We begin with the raw amino-acid sequence, 384 residues long: Deoxyguanosinetriphosphate triphosphohydrolase-like protein (384 aa).

The HD domain maps to 62-198 (RLTHSLEVST…AALADDISYI (137 aa)).

The protein belongs to the dGTPase family. Type 2 subfamily.

The polypeptide is Deoxyguanosinetriphosphate triphosphohydrolase-like protein (Rickettsia peacockii (strain Rustic)).